A 1356-amino-acid chain; its full sequence is Partitioning defective 3 homolog (1356 aa).

Phosphoserine is present on Ser-25. Disordered regions lie at residues 81–100 (EQDP…GTQS) and 154–262 (SVSD…GLEH). The residue at position 91 (Thr-91) is a Phosphothreonine. The segment covering 91-100 (TSASSTGTQS) has biased composition (low complexity). 2 stretches are compositionally biased toward polar residues: residues 154 to 163 (SVSDSNFSSE) and 171 to 187 (TRWS…TAGS). A phosphoserine mark is found at Ser-156 and Ser-174. Residues 190–203 (TCDRKKDENYRSLP) are compositionally biased toward basic and acidic residues. The segment covering 204–224 (RDTSNWSNQFQRDNARSSLSA) has biased composition (polar residues). Residues 246–260 (DNSRVEPVGHADTGL) are compositionally biased toward basic and acidic residues. Residues 271-359 (MVKLVEVPND…TPIIWFHVVP (89 aa)) enclose the PDZ 1 domain. Ser-383 is modified (phosphoserine). The interval 408 to 448 (LNHPPEQIDSHSRLPHSAHPSGKPPSAPASAPQNVFSTTVS) is disordered. PDZ domains are found at residues 461–546 (NIQL…LVFR) and 590–677 (EVPL…GMIQ). At Tyr-489 the chain carries Phosphotyrosine. 7 positions are modified to phosphoserine: Ser-692, Ser-695, Ser-715, Ser-728, Ala-792, Ser-809, and Ser-827. The interaction with PRKCI and PRKCZ stretch occupies residues 712 to 936 (RRISHSLYSG…AAIDKSYDKP (225 aa)). Residue Lys-834 is modified to N6-acetyllysine. Residue Ser-837 is modified to Phosphoserine. An N6-acetyllysine modification is found at Lys-851. Phosphoserine occurs at positions 852 and 873. Disordered stretches follow at residues 865-886 (TVDD…GLKK) and 932-1025 (SYDK…DMFR). An N6-acetyllysine modification is found at Lys-885. Residues 935–1356 (KPAVDDDDEG…TPEKGRPFYS (422 aa)) form an interaction with FRMD4A region. Residues 939 to 953 (DDDDEGMETLEEDTE) are compositionally biased toward acidic residues. Ser-962 is subject to Phosphoserine; by AURKA. Positions 968 to 982 (DQPSHSLERQMNGNQ) are enriched in polar residues. Phosphoserine occurs at positions 971 and 973. Over residues 983–1009 (EKGDKTDRKKDKTGKEKKKDRDKEKDK) the composition is skewed to basic and acidic residues. The residue at position 1046 (Ser-1046) is a Phosphoserine. Residues 1049–1077 (SEEERIRMKQEQERIQAKTREFRERQARE) adopt a coiled-coil conformation. A disordered region spans residues 1129–1356 (QVKKPRNSKP…TPEKGRPFYS (228 aa)). The span at 1136–1149 (SKPSPVDSNRSTPS) shows a compositional bias: polar residues. A compositionally biased stretch (basic and acidic residues) spans 1150-1177 (NHDRIQRLRQEFQQAKQDEDVEDRRRTY). Coiled coils occupy residues 1151–1174 (HDRI…EDRR), 1201–1224 (VQMQ…YSSL), and 1280–1301 (MLET…MKKQ). Residues 1196–1205 (SVSVEVQMQR) are compositionally biased toward low complexity. Over residues 1221–1245 (YSSLPRQSRKNASSVSQDSWEQNYS) the composition is skewed to polar residues. Residues 1285–1298 (ELLRQEQRRKEQQM) are compositionally biased toward basic and acidic residues. The span at 1337–1346 (SQVARLNRLQ) shows a compositional bias: polar residues. Residues 1347–1356 (TPEKGRPFYS) are compositionally biased toward basic and acidic residues. Residue Lys-1350 is modified to N6-acetyllysine.

This sequence belongs to the PAR3 family. In terms of assembly, interacts (via PDZ 1 domain) with F11R/JAM1, PARD6A and PARD6B. Interacts with PRCKI and CDH5. Interacts (via PDZ 3 domain) with PTEN (via C-terminus). Part of a complex with PARD6A or PARD6B, PRKCI or PRKCZ and CDC42 or RAC1. Component of a complex whose core is composed of ARHGAP17, AMOT, PALS1, PATJ and PARD3/PAR3. Interacts with LIMK2, AURKA and AURKB. Component of the Par polarity complex, composed of at least phosphorylated PRKCZ, PARD3 and TIAM1. Directly interacts with TIAM1 and TIAM2. Interacts with ECT2, FBF1 and SIRT2. Interacts (via coiled-coil domain) with FRMD4A. Found in a complex with PARD3, CYTH1 and FRMD4A. Interacts with SAPCD2. Interacts with PRKCA. Interacts with PRKCZ. Post-translationally, acetylated. Deacetylated by SIRT2, thereby inhibiting Schwann cell peripheral myelination. Phosphorylation at Ser-827 by PRKCZ and PRKCI occurs at the most apical tip of epithelial cell-cell contacts during the initial phase of tight junction formation and may promote dissociation of the complex with PARD6. EGF-induced Tyr-1127 phosphorylation mediates dissociation from LIMK2. Phosphorylation by AURKA at Ser-962 is required for the normal establishment of neuronal polarity. In terms of tissue distribution, widely expressed.

Its subcellular location is the cytoplasm. The protein resides in the endomembrane system. It localises to the cell junction. It is found in the tight junction. The protein localises to the adherens junction. Its subcellular location is the cell membrane. The protein resides in the cell cortex. It localises to the cytoskeleton. Its function is as follows. Adapter protein involved in asymmetrical cell division and cell polarization processes. Seems to play a central role in the formation of epithelial tight junctions. Targets the phosphatase PTEN to cell junctions. Involved in Schwann cell peripheral myelination. Association with PARD6B may prevent the interaction of PARD3 with F11R/JAM1, thereby preventing tight junction assembly. The PARD6-PARD3 complex links GTP-bound Rho small GTPases to atypical protein kinase C proteins. Required for establishment of neuronal polarity and normal axon formation in cultured hippocampal neurons. The polypeptide is Partitioning defective 3 homolog (Homo sapiens (Human)).